Here is a 337-residue protein sequence, read N- to C-terminus: Primase homolog protein (337 aa).

One can recognise a Toprim domain in the interval 205-304; it reads SEIIIVEGEP…WLVKWPKKSE (100 aa). Residues glutamate 211, aspartate 273, and aspartate 275 each coordinate Mg(2+).

Mg(2+) serves as cofactor.

Its function is as follows. May act as a DNA primase. This chain is Primase homolog protein, found in Arabidopsis thaliana (Mouse-ear cress).